Here is a 222-residue protein sequence, read N- to C-terminus: uncharacterized protein (222 aa).

This is an uncharacterized protein from Archaeoglobus fulgidus (strain ATCC 49558 / DSM 4304 / JCM 9628 / NBRC 100126 / VC-16).